Consider the following 285-residue polypeptide: GTP cyclohydrolase 1 type 2 homolog (285 aa).

A divalent metal cation contacts are provided by H65, H66, D104, H230, and E234.

The protein belongs to the GTP cyclohydrolase I type 2/NIF3 family. Homohexamer.

The polypeptide is GTP cyclohydrolase 1 type 2 homolog (Streptomyces coelicolor (strain ATCC BAA-471 / A3(2) / M145)).